The following is a 317-amino-acid chain: Putative HTH-type transcriptional regulatory protein TGAM_1316 (317 aa).

The HTH cro/C1-type domain occupies 131–189 (LKKLREKHGYSVGELASLLGVSRKSLLNYERNEQAVSLEVALRMEELFDEPIAEPIDVL). Residues 142–161 (VGELASLLGVSRKSLLNYER) constitute a DNA-binding region (H-T-H motif).

This Thermococcus gammatolerans (strain DSM 15229 / JCM 11827 / EJ3) protein is Putative HTH-type transcriptional regulatory protein TGAM_1316.